The chain runs to 258 residues: Type III pantothenate kinase (258 aa).

ATP is bound at residue 6–13 (DVGNTNTV). Residues tyrosine 100 and 107-110 (GADR) contribute to the substrate site. The active-site Proton acceptor is aspartate 109. K(+) is bound at residue aspartate 129. Threonine 132 is a binding site for ATP. Residue threonine 184 participates in substrate binding.

This sequence belongs to the type III pantothenate kinase family. In terms of assembly, homodimer. Requires NH4(+) as cofactor. The cofactor is K(+).

It localises to the cytoplasm. It catalyses the reaction (R)-pantothenate + ATP = (R)-4'-phosphopantothenate + ADP + H(+). The protein operates within cofactor biosynthesis; coenzyme A biosynthesis; CoA from (R)-pantothenate: step 1/5. Its function is as follows. Catalyzes the phosphorylation of pantothenate (Pan), the first step in CoA biosynthesis. In Geobacillus thermodenitrificans (strain NG80-2), this protein is Type III pantothenate kinase.